The following is a 466-amino-acid chain: NADH-quinone oxidoreductase subunit N (466 aa).

14 helical membrane passes run 9–29 (LIPLLILACGSVFVLMLGAIV), 33–53 (CGTVIGVAVCAGTALWAMLAP), 68–88 (PFTRFFLVFFAVTAGLSLLLA), 100–120 (EEYPATILFGTFGMGVVASAA), 122–142 (FLTLFLGLEALTFAFYILVAY), 157–177 (LLMGAVSAAFVAFGIALLYGA), 190–210 (SAAGGGIALAGWGLLLAGLAF), 232–252 (VVAFLASGSKGAAIALFLLIL), 263–283 (APLWGLAFLSMTVGNLAALLQ), 289–309 (MLAYSSVAQMGYVALALLSGG), 314–334 (AAAFYAVAYGAMVLAAFGALA), 359–379 (GVVLAVAMLALAGIPPTVGFV), 394–416 (APLAVIGILTAAASAYYYLRVVV), and 438–458 (LSLGIAALAIFILGIWPGPLF).

Belongs to the complex I subunit 2 family. In terms of assembly, NDH-1 is composed of 14 different subunits. Subunits NuoA, H, J, K, L, M, N constitute the membrane sector of the complex.

The protein localises to the cell inner membrane. It carries out the reaction a quinone + NADH + 5 H(+)(in) = a quinol + NAD(+) + 4 H(+)(out). In terms of biological role, NDH-1 shuttles electrons from NADH, via FMN and iron-sulfur (Fe-S) centers, to quinones in the respiratory chain. The immediate electron acceptor for the enzyme in this species is believed to be ubiquinone. Couples the redox reaction to proton translocation (for every two electrons transferred, four hydrogen ions are translocated across the cytoplasmic membrane), and thus conserves the redox energy in a proton gradient. In Geobacter metallireducens (strain ATCC 53774 / DSM 7210 / GS-15), this protein is NADH-quinone oxidoreductase subunit N.